The chain runs to 98 residues: MSRACELTGKTVQYGNNVSHANNKTRRRFLPNLCNVTLISEVMQQSYRLRISANAVRSVEHRGGLDNFLTKADDKELSQRARLLKRQIVKKKAEQAAA.

It belongs to the bacterial ribosomal protein bL28 family.

The sequence is that of Large ribosomal subunit protein bL28 from Bartonella bacilliformis (strain ATCC 35685 / KC583 / Herrer 020/F12,63).